A 131-amino-acid polypeptide reads, in one-letter code: Small ribosomal subunit protein uS19 (131 aa).

Belongs to the universal ribosomal protein uS19 family.

In terms of biological role, protein S19 forms a complex with S13 that binds strongly to the 16S ribosomal RNA. This Cenarchaeum symbiosum (strain A) protein is Small ribosomal subunit protein uS19.